The following is a 268-amino-acid chain: Membrane lipoprotein TpN32 (268 aa).

The signal sequence occupies residues 1 to 23 (MKGKTVSAALVGKLIALSVGVVA). Residue Cys24 is the site of N-palmitoyl cysteine attachment. The S-diacylglycerol cysteine moiety is linked to residue Cys24.

Belongs to the NlpA lipoprotein family.

The protein resides in the cell membrane. In Treponema pallidum (strain Nichols), this protein is Membrane lipoprotein TpN32 (tpn32).